Consider the following 616-residue polypeptide: Replication protein A 70 kDa DNA-binding subunit (616 aa).

Position 1 is an N-acetylmethionine (M1). Residues K22 and K88 each participate in a glycyl lysine isopeptide (Lys-Gly) (interchain with G-Cter in ubiquitin) cross-link. The disordered stretch occupies residues G121–T154. Positions A134–Q145 are enriched in low complexity. N6-acetyllysine; alternate occurs at positions 163 and 167. Glycyl lysine isopeptide (Lys-Gly) (interchain with G-Cter in ubiquitin); alternate cross-links involve residues K163 and K167. T180 bears the Phosphothreonine mark. K183 participates in a covalent cross-link: Glycyl lysine isopeptide (Lys-Gly) (interchain with G-Cter in ubiquitin). Phosphothreonine is present on T191. Positions W197–N281 form a DNA-binding region, OB. Glycyl lysine isopeptide (Lys-Gly) (interchain with G-Cter in ubiquitin) cross-links involve residues K220 and K244. The residue at position 259 (K259) is an N6-acetyllysine; alternate. Residue K259 forms a Glycyl lysine isopeptide (Lys-Gly) (interchain with G-Cter in ubiquitin); alternate linkage. Glycyl lysine isopeptide (Lys-Gly) (interchain with G-Cter in ubiquitin) cross-links involve residues K267 and K331. A Phosphoserine modification is found at S384. Residues K410 and K431 each participate in a glycyl lysine isopeptide (Lys-Gly) (interchain with G-Cter in ubiquitin) cross-link. A Glycyl lysine isopeptide (Lys-Gly) (interchain with G-Cter in SUMO) cross-link involves residue K449. Residue K458 forms a Glycyl lysine isopeptide (Lys-Gly) (interchain with G-Cter in ubiquitin) linkage. A C4-type zinc finger spans residues C481–C503. A Glycyl lysine isopeptide (Lys-Gly) (interchain with G-Cter in ubiquitin) cross-link involves residue K553. K577 participates in a covalent cross-link: Glycyl lysine isopeptide (Lys-Gly) (interchain with G-Cter in SUMO).

It belongs to the replication factor A protein 1 family. As to quaternary structure, component of the canonical replication protein A complex (RPA), a heterotrimer composed of RPA1, RPA2 and RPA3. Also a component of the aRPA, the alternative replication protein A complex, a trimeric complex similar to the replication protein A complex/RPA but where RPA1 and RPA3 are associated with RPA4 instead of RPA2. The DNA-binding activity may reside exclusively on the RPA1 subunit. Interacts with PRPF19; the PRP19-CDC5L complex is recruited to the sites of DNA repair where it ubiquitinates the replication protein A complex (RPA). Interacts with RIPK1. Interacts with the polymerase alpha subunit POLA1/p180; this interaction stabilizes the replicative complex and reduces the misincorporation rate of DNA polymerase alpha by acting as a fidelity clamp. Interacts with RAD51 and SENP6 to regulate DNA repair. Interacts with HELB; this interaction promotes HELB recruitment to chromatin following DNA damage. Interacts with PRIMPOL; leading to recruit PRIMPOL on chromatin and stimulate its DNA primase activity. Interacts with XPA; the interaction is direct and associates XPA with the RPA complex. Interacts with ETAA1; the interaction is direct and promotes ETAA1 recruitment at stalled replication forks. Interacts with RPA1; this interaction associates HROB with the RPA complex. Interacts (when poly-ADP-ribosylated) with HTATSF1. Interacts with BRIP1/FANCJ via this RPA1 subunit; following DNA damage they colocalize in foci in the nucleus. Post-translationally, DNA damage-induced 'Lys-63'-linked polyubiquitination by PRPF19 mediates ATRIP recruitment to the RPA complex at sites of DNA damage and activation of ATR. Ubiquitinated by RFWD3 at stalled replication forks in response to DNA damage: ubiquitination by RFWD3 does not lead to degradation by the proteasome and promotes removal of the RPA complex from stalled replication forks, promoting homologous recombination. In terms of processing, sumoylated on lysine residues Lys-449 and Lys-577, with Lys-449 being the major site. Sumoylation promotes recruitment of RAD51 to the DNA damage foci to initiate DNA repair through homologous recombination. Desumoylated by SENP6. Poly-ADP-ribosylated by PARP1; promoting recruitment of HTATSF1.

It is found in the nucleus. The protein localises to the PML body. Functionally, as part of the heterotrimeric replication protein A complex (RPA/RP-A), binds and stabilizes single-stranded DNA intermediates that form during DNA replication or upon DNA stress. It prevents their reannealing and in parallel, recruits and activates different proteins and complexes involved in DNA metabolism. Thereby, it plays an essential role both in DNA replication and the cellular response to DNA damage. In the cellular response to DNA damage, the RPA complex controls DNA repair and DNA damage checkpoint activation. Through recruitment of ATRIP activates the ATR kinase a master regulator of the DNA damage response. It is required for the recruitment of the DNA double-strand break repair factors RAD51 and RAD52 to chromatin in response to DNA damage. Also recruits to sites of DNA damage proteins like XPA and XPG that are involved in nucleotide excision repair and is required for this mechanism of DNA repair. Also plays a role in base excision repair (BER) probably through interaction with UNG. Also recruits SMARCAL1/HARP, which is involved in replication fork restart, to sites of DNA damage. Plays a role in telomere maintenance. As part of the alternative replication protein A complex, aRPA, binds single-stranded DNA and probably plays a role in DNA repair. Compared to the RPA2-containing, canonical RPA complex, may not support chromosomal DNA replication and cell cycle progression through S-phase. The aRPA may not promote efficient priming by DNA polymerase alpha but could support DNA synthesis by polymerase delta in presence of PCNA and replication factor C (RFC), the dual incision/excision reaction of nucleotide excision repair and RAD51-dependent strand exchange. RPA stimulates 5'-3' helicase activity of the BRIP1/FANCJ. The polypeptide is Replication protein A 70 kDa DNA-binding subunit (RPA1) (Homo sapiens (Human)).